A 338-amino-acid polypeptide reads, in one-letter code: MMAMNAKQPFGMHPVLQEPKFSSLHSGSEAMRRVCLPAPQLQGNIFGSFDESLLARAEALAAVDIVSHGKNHPFKPDATYHTMSSVPCTSTSPTVPISHPAALTSHPHHPVHQGLEGDLLEHISPTLSVSGLGAPEHSVMPAQIHPHHLGAMGHLHQAMGMSHPHAVAPHSAMPACLSDVESDPRELEAFAERFKQRRIKLGVTQADVGAALANLKIPGVGSLSQSTICRFESLTLSHNNMIALKPVLQAWLEEAEAAYREKNSKPELFNGSERKRKRTSIAAPEKRSLEAYFAIQPRPSSEKIAAIAEKLDLKKNVVRVWFCNQRQKQKRMKYSAVH.

The POU-IV box signature appears at Arg56 to Ile65. The disordered stretch occupies residues Thr91–His112. The POU-specific domain occupies Asp179–Glu256. Positions Arg274–Lys333 form a DNA-binding region, homeobox.

Belongs to the POU transcription factor family. Interacts with ISL1. Expressed in the chochlea of the inner ear.

The protein localises to the nucleus. The protein resides in the cytoplasm. In terms of biological role, acts as a transcriptional activator. Acts by binding to sequences related to the consensus octamer motif 5'-ATGCAAAT-3' in the regulatory regions of its target genes. Involved in the auditory system development, required for terminal differentiation of hair cells in the inner ear. This Rattus norvegicus (Rat) protein is POU domain, class 4, transcription factor 3.